We begin with the raw amino-acid sequence, 254 residues long: 5-oxoprolinase subunit A (254 aa).

This sequence belongs to the LamB/PxpA family. In terms of assembly, forms a complex composed of PxpA, PxpB and PxpC.

The catalysed reaction is 5-oxo-L-proline + ATP + 2 H2O = L-glutamate + ADP + phosphate + H(+). Functionally, catalyzes the cleavage of 5-oxoproline to form L-glutamate coupled to the hydrolysis of ATP to ADP and inorganic phosphate. This Acinetobacter baumannii (strain ACICU) protein is 5-oxoprolinase subunit A.